A 238-amino-acid chain; its full sequence is Membrane protein 2 (238 aa).

Belongs to the varicellovirus ORF2 protein family. Post-translationally, phosphorylated by host.

It localises to the host membrane. The sequence is that of Membrane protein 2 from Varicella-zoster virus (strain Dumas) (HHV-3).